The following is a 29-amino-acid chain: MKHSEKNEIASHELPTTPLDPVLAAGRES.

Residues 1-11 (MKHSEKNEIAS) are compositionally biased toward basic and acidic residues. Residues 1-29 (MKHSEKNEIASHELPTTPLDPVLAAGRES) are disordered.

The protein belongs to the [NiFe]/[NiFeSe] hydrogenase small subunit family. As to quaternary structure, tetramer of an alpha and a gamma subunits (flavin-containing dimer), and a delta and a nickel-containing beta subunits (hydrogenase dimer). [4Fe-4S] cluster serves as cofactor. Requires [3Fe-4S] cluster as cofactor. [2Fe-2S] cluster is required as a cofactor. The cofactor is FMN. It depends on Ni(2+) as a cofactor.

The protein localises to the cytoplasm. It carries out the reaction H2 + NAD(+) = NADH + H(+). This is NAD-reducing hydrogenase HoxS subunit delta (hoxY) from Rhodococcus opacus (Nocardia opaca).